Consider the following 208-residue polypeptide: Urease accessory protein UreG 1 (208 aa).

14–21 (GPVGSGKT) lines the GTP pocket.

The protein belongs to the SIMIBI class G3E GTPase family. UreG subfamily. As to quaternary structure, homodimer. UreD, UreF and UreG form a complex that acts as a GTP-hydrolysis-dependent molecular chaperone, activating the urease apoprotein by helping to assemble the nickel containing metallocenter of UreC. The UreE protein probably delivers the nickel.

It is found in the cytoplasm. Its function is as follows. Facilitates the functional incorporation of the urease nickel metallocenter. This process requires GTP hydrolysis, probably effectuated by UreG. Disruption of the ure1 gene cluster suggests that it protects brucellae during their passage through the stomach. The major route of infection in human brucellosis is oral. This is Urease accessory protein UreG 1 from Brucella abortus (strain 2308).